The primary structure comprises 160 residues: Probable small nuclear ribonucleoprotein-associated protein B (160 aa).

The Sm domain maps to 4-86 (SKNNKMMAHL…IVSMTVDGPP (83 aa)). The disordered stretch occupies residues 80 to 160 (MTVDGPPPRD…YGGPPGGRPF (81 aa)). 3 stretches are compositionally biased toward gly residues: residues 99–113 (GGAG…GGRG), 128–143 (APGG…GGPG), and 150–160 (GYGGPPGGRPF).

The protein belongs to the snRNP SmB/SmN family.

The protein resides in the nucleus. It is found in the cytoplasm. It localises to the cytosol. In terms of biological role, plays a role in pre-mRNA splicing as a core component of the spliceosomal U1, U2, U4 and U5 small nuclear ribonucleoproteins (snRNPs), the building blocks of the spliceosome. The polypeptide is Probable small nuclear ribonucleoprotein-associated protein B (snr-2) (Caenorhabditis elegans).